Consider the following 513-residue polypeptide: 2-isopropylmalate synthase (513 aa).

One can recognise a Pyruvate carboxyltransferase domain in the interval 4 to 266 (IEFFDTSLRD…QSPLKLSETA (263 aa)). Mn(2+)-binding residues include D13, H201, H203, and N237. A regulatory domain region spans residues 390 to 513 (ILDNVQIDGH…VEQISAHDGI (124 aa)).

This sequence belongs to the alpha-IPM synthase/homocitrate synthase family. LeuA type 1 subfamily. Homodimer. Mn(2+) serves as cofactor.

Its subcellular location is the cytoplasm. The catalysed reaction is 3-methyl-2-oxobutanoate + acetyl-CoA + H2O = (2S)-2-isopropylmalate + CoA + H(+). Its pathway is amino-acid biosynthesis; L-leucine biosynthesis; L-leucine from 3-methyl-2-oxobutanoate: step 1/4. In terms of biological role, catalyzes the condensation of the acetyl group of acetyl-CoA with 3-methyl-2-oxobutanoate (2-ketoisovalerate) to form 3-carboxy-3-hydroxy-4-methylpentanoate (2-isopropylmalate). In Lactococcus lactis subsp. lactis (strain IL1403) (Streptococcus lactis), this protein is 2-isopropylmalate synthase.